The sequence spans 238 residues: Aspartate/glutamate leucyltransferase (238 aa).

Belongs to the R-transferase family. Bpt subfamily.

It is found in the cytoplasm. The enzyme catalyses N-terminal L-glutamyl-[protein] + L-leucyl-tRNA(Leu) = N-terminal L-leucyl-L-glutamyl-[protein] + tRNA(Leu) + H(+). It catalyses the reaction N-terminal L-aspartyl-[protein] + L-leucyl-tRNA(Leu) = N-terminal L-leucyl-L-aspartyl-[protein] + tRNA(Leu) + H(+). In terms of biological role, functions in the N-end rule pathway of protein degradation where it conjugates Leu from its aminoacyl-tRNA to the N-termini of proteins containing an N-terminal aspartate or glutamate. This is Aspartate/glutamate leucyltransferase from Shewanella sp. (strain MR-7).